The chain runs to 455 residues: uncharacterized protein (455 aa).

This is an uncharacterized protein from Acanthamoeba polyphaga (Amoeba).